The sequence spans 477 residues: Xylose isomerase (477 aa).

Histidine 142 is a catalytic residue. Mn(2+)-binding residues include glutamate 273, glutamate 309, histidine 312, aspartate 337, aspartate 348, aspartate 350, and aspartate 380.

Belongs to the xylose isomerase family. Mn(2+) is required as a cofactor.

It carries out the reaction alpha-D-xylose = alpha-D-xylulofuranose. In Arabidopsis thaliana (Mouse-ear cress), this protein is Xylose isomerase (XYLA).